Reading from the N-terminus, the 120-residue chain is Large ribosomal subunit protein bL19 (120 aa).

Belongs to the bacterial ribosomal protein bL19 family.

In terms of biological role, this protein is located at the 30S-50S ribosomal subunit interface and may play a role in the structure and function of the aminoacyl-tRNA binding site. The chain is Large ribosomal subunit protein bL19 from Geobacillus kaustophilus (strain HTA426).